Reading from the N-terminus, the 427-residue chain is Enolase (427 aa).

Glutamine 163 provides a ligand contact to (2R)-2-phosphoglycerate. The active-site Proton donor is the glutamate 205. Residues aspartate 242, glutamate 285, and aspartate 312 each coordinate Mg(2+). 4 residues coordinate (2R)-2-phosphoglycerate: lysine 337, arginine 366, serine 367, and lysine 388. Residue lysine 337 is the Proton acceptor of the active site.

It belongs to the enolase family. Mg(2+) serves as cofactor.

The protein localises to the cytoplasm. Its subcellular location is the secreted. It localises to the cell surface. The enzyme catalyses (2R)-2-phosphoglycerate = phosphoenolpyruvate + H2O. It functions in the pathway carbohydrate degradation; glycolysis; pyruvate from D-glyceraldehyde 3-phosphate: step 4/5. Its function is as follows. Catalyzes the reversible conversion of 2-phosphoglycerate (2-PG) into phosphoenolpyruvate (PEP). It is essential for the degradation of carbohydrates via glycolysis. This chain is Enolase, found in Bradyrhizobium diazoefficiens (strain JCM 10833 / BCRC 13528 / IAM 13628 / NBRC 14792 / USDA 110).